Consider the following 695-residue polypeptide: Segment polarity protein dishevelled homolog DVL-1 (695 aa).

A DIX domain is found at 1–85 (MAETKIIYHM…RVVSWLVLAE (85 aa)). Positions 89 to 237 (SDAGSQGTDS…LRQADRASSF (149 aa)) are disordered. The segment covering 142 to 151 (SHRRERARRR) has biased composition (basic residues). A compositionally biased stretch (basic and acidic residues) spans 152 to 171 (NREEAARTNGHPRGDRRRDV). A compositionally biased stretch (low complexity) spans 176-192 (DSASTALSSELESSSFV). S194 bears the Phosphoserine mark. Residues 200–214 (TSRLSSSTEQSTSSR) are compositionally biased toward low complexity. Residues 215 to 228 (LIRKHKRRRRKQRL) show a composition bias toward basic residues. One can recognise a PDZ domain in the interval 251 to 323 (TVTLNMERHH…NDDAVRVLRE (73 aa)). A DEP domain is found at 425-499 (PDSGLEIRDR…SEQCYYVFGD (75 aa)). The tract at residues 543 to 667 (PGPPPCFPPA…PGGPPVRELA (125 aa)) is disordered. Positions 551 to 580 (PAYQDPGFSYGSGSTGSQQSEGSKSSGSTR) are enriched in low complexity. Polar residues predominate over residues 625–636 (SRGSSPRSQASA).

The protein belongs to the DSH family. In terms of assembly, interacts with CXXC4. Interacts (via PDZ domain) with NXN. Interacts with BRD7 and INVS. Interacts (via PDZ domain) with VANGL1 and VANGL2 (via C-terminus). Interacts with ARRB1; the interaction is enhanced by phosphorylation of DVL1. Interacts with CYLD. Interacts (via PDZ domain) with RYK. Self-associates (via DIX domain) and forms higher homooligomers. Interacts (via PDZ domain) with DACT1 and FZD7, where DACT1 and FZD7 compete for the same binding site. Interacts (via DEP domain) with MUSK; the interaction is direct and mediates the formation a DVL1, MUSK and PAK1 ternary complex involved in AChR clustering. Interacts (via PDZ domain) with TMEM88. Interacts with DCDC2. Interacts with FOXK2. Interacts with PKD1 (via extracellular domain). Interacts (via PDZ domain) with CCDC88C/DAPLE; competes with CCDC88C for binding to frizzled receptor FZD7 and dissociates from CCDC88C following initiation of non-canonical Wnt signaling when CCDC88C displaces DVL1 from ligand-activated FZD7. Post-translationally, ubiquitinated; undergoes both 'Lys-48'-linked ubiquitination, leading to its subsequent degradation by the ubiquitin-proteasome pathway, and 'Lys-63'-linked ubiquitination. The interaction with INVS is required for ubiquitination. Deubiquitinated by CYLD, which acts on 'Lys-63'-linked ubiquitin chains.

The protein resides in the cell membrane. It is found in the cytoplasm. Its subcellular location is the cytosol. The protein localises to the cytoplasmic vesicle. Functionally, participates in Wnt signaling by binding to the cytoplasmic C-terminus of frizzled family members and transducing the Wnt signal to down-stream effectors. Plays a role both in canonical and non-canonical Wnt signaling. Plays a role in the signal transduction pathways mediated by multiple Wnt genes. Required for LEF1 activation upon WNT1 and WNT3A signaling. DVL1 and PAK1 form a ternary complex with MUSK which is important for MUSK-dependent regulation of AChR clustering during the formation of the neuromuscular junction (NMJ). This chain is Segment polarity protein dishevelled homolog DVL-1 (DVL1), found in Homo sapiens (Human).